The primary structure comprises 186 residues: dCTP deaminase, dUMP-forming (186 aa).

Residues Arg101 to Arg106, Asp119, Thr127 to Glu129, Gln148, Tyr162, and Gln171 each bind dCTP. Residue Glu129 is the Proton donor/acceptor of the active site.

Belongs to the dCTP deaminase family. As to quaternary structure, homotrimer.

The catalysed reaction is dCTP + 2 H2O = dUMP + NH4(+) + diphosphate. Its pathway is pyrimidine metabolism; dUMP biosynthesis; dUMP from dCTP: step 1/1. Functionally, bifunctional enzyme that catalyzes both the deamination of dCTP to dUTP and the hydrolysis of dUTP to dUMP without releasing the toxic dUTP intermediate. This is dCTP deaminase, dUMP-forming from Coprothermobacter proteolyticus (strain ATCC 35245 / DSM 5265 / OCM 4 / BT).